Consider the following 212-residue polypeptide: MNLFRFLGDLSHLLAIILLLLKIWKSRSCAGISGKSQVLFAVVFTARYLDLFTNYISLYNTCMKVVYIACSFTTVWMIYSKFKATYDGNHDTFRVEFLVVPTAVLAFLVNHDFTPLEILWTFSIYLESVAILPQLFMVSKTGEAETITSHYLFALGVYRTLYLFNWIWRYHFEGFFDLIAIVAGLVQTVLYCDFFYLYITKVLKGKKLSLPA.

The Lumenal portion of the chain corresponds to 1–4 (MNLF). Residues 5-24 (RFLGDLSHLLAIILLLLKIW) traverse the membrane as a helical segment. Residues 25–32 (KSRSCAGI) lie on the Cytoplasmic side of the membrane. A helical transmembrane segment spans residues 33-52 (SGKSQVLFAVVFTARYLDLF). The interaction with the K-D-E-L motif on target proteins stretch occupies residues 47–48 (RY). The Lumenal portion of the chain corresponds to 53–58 (TNYISL). A helical transmembrane segment spans residues 59–79 (YNTCMKVVYIACSFTTVWMIY). Over 80–92 (SKFKATYDGNHDT) the chain is Cytoplasmic. A helical transmembrane segment spans residues 93–110 (FRVEFLVVPTAVLAFLVN). Residues 111 to 116 (HDFTPL) lie on the Lumenal side of the membrane. A helical transmembrane segment spans residues 117 to 135 (EILWTFSIYLESVAILPQL). The Cytoplasmic segment spans residues 136-149 (FMVSKTGEAETITS). Residues 150-168 (HYLFALGVYRTLYLFNWIW) form a helical membrane-spanning segment. The interaction with the K-D-E-L motif on target proteins stretch occupies residues 159-169 (RTLYLFNWIWR). Topologically, residues 169 to 178 (RYHFEGFFDL) are lumenal. A helical membrane pass occupies residues 179-199 (IAIVAGLVQTVLYCDFFYLYI). At 200 to 212 (TKVLKGKKLSLPA) the chain is on the cytoplasmic side. The tract at residues 204 to 207 (KGKK) is important for recycling of cargo proteins with the sequence motif K-D-E-L from the Golgi to the endoplasmic reticulum. S209 is subject to Phosphoserine; by PKA.

This sequence belongs to the ERD2 family. As to quaternary structure, upon ligand binding the receptor oligomerizes and interacts with components of the transport machinery such as ARFGAP1 and ARF1. Phosphorylation by PKA at Ser-209 is required for endoplasmic reticulum retention function.

Its subcellular location is the golgi apparatus membrane. It is found in the cytoplasmic vesicle. The protein localises to the COPI-coated vesicle membrane. The protein resides in the endoplasmic reticulum membrane. It localises to the endoplasmic reticulum-Golgi intermediate compartment membrane. Receptor for the C-terminal sequence motif K-D-E-L that is present on endoplasmic reticulum resident proteins and that mediates their recycling from the Golgi back to the endoplasmic reticulum. This is ER lumen protein-retaining receptor 1 (Kdelr1) from Rattus norvegicus (Rat).